The primary structure comprises 1116 residues: Ubiquitin C-terminal hydrolase 12 (1116 aa).

Over residues 1-10 (MTMMTPPPVD) the composition is skewed to pro residues. The segment at 1–52 (MTMMTPPPVDQPEDEEMLVPNSDLVDGPAQPMEVTQPETAASTVENQPAEDP) is disordered. Residues 36 to 46 (QPETAASTVEN) show a composition bias toward polar residues. Positions 54–179 (TLKFTWTIPN…NDTVLVEAEV (126 aa)) constitute an MATH domain. The USP domain occupies 199-524 (VGLKNQGATC…NAYMLVYIRE (326 aa)). Catalysis depends on Cys208, which acts as the Nucleophile. Catalysis depends on His455, which acts as the Proton acceptor.

The protein belongs to the peptidase C19 family. In terms of assembly, interacts with SIC/RON3.

The catalysed reaction is Thiol-dependent hydrolysis of ester, thioester, amide, peptide and isopeptide bonds formed by the C-terminal Gly of ubiquitin (a 76-residue protein attached to proteins as an intracellular targeting signal).. In terms of biological role, recognizes and hydrolyzes the peptide bond at the C-terminal Gly of ubiquitin. Involved in the processing of poly-ubiquitin precursors as well as that of ubiquitinated proteins. Positive regulator of root meristem development that, together with UBP13, prevents the ubiquitination and turnover of RGFR1 induced by the RGF1 hormone peptide, thus influencing PLT1 and PLT2 expression. The chain is Ubiquitin C-terminal hydrolase 12 from Arabidopsis thaliana (Mouse-ear cress).